The sequence spans 392 residues: Speckle-type POZ protein-like (392 aa).

One can recognise an MATH domain in the interval 31 to 161 (KFSYMWTINN…DDKLTLYCEV (131 aa)). The 68-residue stretch at 200–267 (TDCSLFVEGK…IYTGGTPHVD (68 aa)) folds into the BTB domain.

Belongs to the Tdpoz family. Homodimer. Heterodimer with SPOP. Component of cullin-RING-based BCR (BTB-CUL3-RBX1) E3 ubiquitin-protein ligase complexes containing homodimeric SPOPL or the heterodimer formed by SPOP and SPOPL.

The protein localises to the nucleus. It functions in the pathway protein modification; protein ubiquitination. In terms of biological role, component of a cullin-RING-based BCR (BTB-CUL3-RBX1) E3 ubiquitin-protein ligase complex that mediates the ubiquitination and subsequent proteasomal degradation of target proteins, but with relatively low efficiency. This Xenopus laevis (African clawed frog) protein is Speckle-type POZ protein-like (spopl).